The chain runs to 514 residues: Multifunctional alkaline phosphatase superfamily protein pRL90232 (514 aa).

Aspartate 12, cysteine 57, aspartate 324, and histidine 325 together coordinate Mn(2+). Cysteine 57 (nucleophile) is an active-site residue. Cysteine 57 is subject to 3-oxoalanine (Cys).

The protein belongs to the alkaline phosphatase superfamily. Homotetramer. Requires Mn(2+) as cofactor. Post-translationally, the conversion to 3-oxoalanine (also known as C-formylglycine, FGly), of a serine or cysteine residue in prokaryotes and of a cysteine residue in eukaryotes, is critical for catalytic activity.

In terms of biological role, hydrolytic enzyme with a broad substrate specificity acting on phosphate diesters and phosphonate monoesters. In Rhizobium johnstonii (strain DSM 114642 / LMG 32736 / 3841) (Rhizobium leguminosarum bv. viciae), this protein is Multifunctional alkaline phosphatase superfamily protein pRL90232.